We begin with the raw amino-acid sequence, 327 residues long: 4-hydroxyproline 2-epimerase (327 aa).

The Proton acceptor role is filled by C85. Substrate contacts are provided by residues 86–87 (GH), H205, and D231. The active-site Proton donor is the C235. Residue 236–237 (GT) participates in substrate binding.

It belongs to the proline racemase family.

It catalyses the reaction trans-4-hydroxy-L-proline = cis-4-hydroxy-D-proline. In terms of biological role, catalyzes the epimerization of trans-4-hydroxy-L-proline (t4LHyp) to cis-4-hydroxy-D-proline (c4DHyp). Displays no proline racemase activity. The sequence is that of 4-hydroxyproline 2-epimerase from Roseibium alexandrii (strain DSM 17067 / NCIMB 14079 / DFL-11) (Labrenzia alexandrii).